Consider the following 205-residue polypeptide: Small ribosomal subunit protein uS3 (205 aa).

One can recognise a KH type-2 domain in the interval 12 to 80; sequence VRQFLAKELA…PAQINIAEVR (69 aa).

Belongs to the universal ribosomal protein uS3 family. In terms of assembly, part of the 30S ribosomal subunit. Forms a tight complex with proteins S10 and S14.

Binds the lower part of the 30S subunit head. Binds mRNA in the 70S ribosome, positioning it for translation. The sequence is that of Small ribosomal subunit protein uS3 from Buchnera aphidicola subsp. Acyrthosiphon kondoi (Acyrthosiphon kondoi symbiotic bacterium).